The primary structure comprises 180 residues: Inosine/xanthosine triphosphatase (180 aa).

8 to 13 (TTNPAK) serves as a coordination point for substrate. Asp38 contributes to the Mg(2+) binding site.

The protein belongs to the YjjX NTPase family. Homodimer. It depends on Mg(2+) as a cofactor. Requires Mn(2+) as cofactor.

It catalyses the reaction XTP + H2O = XDP + phosphate + H(+). It carries out the reaction ITP + H2O = IDP + phosphate + H(+). Phosphatase that hydrolyzes non-canonical purine nucleotides such as XTP and ITP to their respective diphosphate derivatives. Probably excludes non-canonical purines from DNA/RNA precursor pool, thus preventing their incorporation into DNA/RNA and avoiding chromosomal lesions. This chain is Inosine/xanthosine triphosphatase, found in Yersinia pseudotuberculosis serotype O:1b (strain IP 31758).